Reading from the N-terminus, the 122-residue chain is Small ribosomal subunit protein uS13 (122 aa).

The tract at residues R94–K122 is disordered.

Belongs to the universal ribosomal protein uS13 family. Part of the 30S ribosomal subunit. Forms a loose heterodimer with protein S19. Forms two bridges to the 50S subunit in the 70S ribosome.

Functionally, located at the top of the head of the 30S subunit, it contacts several helices of the 16S rRNA. In the 70S ribosome it contacts the 23S rRNA (bridge B1a) and protein L5 of the 50S subunit (bridge B1b), connecting the 2 subunits; these bridges are implicated in subunit movement. Contacts the tRNAs in the A and P-sites. The chain is Small ribosomal subunit protein uS13 from Rubrobacter xylanophilus (strain DSM 9941 / JCM 11954 / NBRC 16129 / PRD-1).